The following is a 335-amino-acid chain: Anthranilate phosphoribosyltransferase (335 aa).

5-phospho-alpha-D-ribose 1-diphosphate-binding positions include Gly-79, 82–83, Ser-87, 89–92, 107–115, and Ser-119; these read GD, NIST, and KHGNRSITS. Gly-79 contacts anthranilate. Ser-91 serves as a coordination point for Mg(2+). Anthranilate is bound at residue Asn-110. Arg-165 provides a ligand contact to anthranilate. Mg(2+)-binding residues include Asp-224 and Glu-225.

This sequence belongs to the anthranilate phosphoribosyltransferase family. In terms of assembly, homodimer. Mg(2+) serves as cofactor.

The enzyme catalyses N-(5-phospho-beta-D-ribosyl)anthranilate + diphosphate = 5-phospho-alpha-D-ribose 1-diphosphate + anthranilate. Its pathway is amino-acid biosynthesis; L-tryptophan biosynthesis; L-tryptophan from chorismate: step 2/5. In terms of biological role, catalyzes the transfer of the phosphoribosyl group of 5-phosphorylribose-1-pyrophosphate (PRPP) to anthranilate to yield N-(5'-phosphoribosyl)-anthranilate (PRA). This Lactococcus lactis subsp. cremoris (strain MG1363) protein is Anthranilate phosphoribosyltransferase.